We begin with the raw amino-acid sequence, 374 residues long: 4-hydroxybenzoate polyprenyltransferase, mitochondrial (374 aa).

The transit peptide at 1–63 (MLRLGGAGLV…RALSLSAAAV (63 aa)) directs the protein to the mitochondrion. Residues 64 to 83 (VNSAPRPLQPYLRLMRLDKP) lie on the Mitochondrial matrix side of the membrane. Residues 84 to 104 (IGTWLLYLPCTWSIGLAADPG) traverse the membrane as a helical segment. Over 105–108 (CFPD) the chain is Mitochondrial intermembrane. The chain crosses the membrane as a helical span at residues 109 to 129 (WYMLSLFGTGAILMRGAGCTI). The Mitochondrial matrix portion of the chain corresponds to 130–153 (NDMWDRDFDKKVERTANRPIAAGD). Residues 154 to 174 (ISAFQSFVFLGAQLTLALGVL) traverse the membrane as a helical segment. Topologically, residues 175 to 176 (LH) are mitochondrial intermembrane. Residues 177-197 (LNYYSIAMGAASLLLVVTYPL) form a helical membrane-spanning segment. The Mitochondrial matrix portion of the chain corresponds to 198-200 (MKR). A helical transmembrane segment spans residues 201–221 (VTFWPQLALGLTFNWGALLGW). The Mitochondrial intermembrane portion of the chain corresponds to 222 to 230 (SAVKGSCDP). The helical transmembrane segment at 231-251 (AVCLPLYFSGVMWTLIYDTIY) threads the bilayer. Residues 252-277 (AHQDKKDDALIGLKSTALLFRENTKQ) lie on the Mitochondrial matrix side of the membrane. A helical membrane pass occupies residues 278-298 (WLSGFGVAMVGALSLVGASSG). The Mitochondrial intermembrane portion of the chain corresponds to 299–300 (QT). A helical membrane pass occupies residues 301 to 321 (LPYYAAVAAVGAHLAHQIYTV). The Mitochondrial matrix portion of the chain corresponds to 322–332 (DIHRAEDCWEK). A helical membrane pass occupies residues 333–353 (FTSNRTVGLLLFLGIVLGNLY). Residues 354 to 374 (KDKPDETKGVDAVGEESERTS) are Mitochondrial intermembrane-facing.

It belongs to the UbiA prenyltransferase family. It depends on Mg(2+) as a cofactor.

It is found in the mitochondrion inner membrane. The enzyme catalyses an all-trans-polyprenyl diphosphate + 4-hydroxybenzoate = a 4-hydroxy-3-(all-trans-polyprenyl)benzoate + diphosphate. It carries out the reaction all-trans-decaprenyl diphosphate + 4-hydroxybenzoate = 4-hydroxy-3-(all-trans-decaprenyl)benzoate + diphosphate. The catalysed reaction is all-trans-nonaprenyl diphosphate + 4-hydroxybenzoate = 4-hydroxy-3-(all-trans-nonaprenyl)benzoate + diphosphate. It functions in the pathway cofactor biosynthesis; ubiquinone biosynthesis. In terms of biological role, mediates the second step in the final reaction sequence of coenzyme Q (CoQ) biosynthesis. Catalyzes the prenylation of para-hydroxybenzoate (PHB) with an all-trans polyprenyl group (such as all-trans-nonaprenyl diphosphate). The length of the polyprenyl side chain varies depending on the species, in humans, the side chain is comprised of 10 isoprenyls producing CoQ10 (also known as ubiquinone), whereas rodents predominantly generate CoQ9. However, this specificity is not complete, human tissues have low amounts of CoQ9 and rodent organs contain some CoQ10. Plays a central role in the biosynthesis of CoQ9. CoQ9 is a vital molecule that transports electrons from mitochondrial respiratory chain complexes. CoQs also function as cofactors for uncoupling protein and plays a role as regulator of the extracellularly-induced ceramide-dependent apoptotic pathway. Regulates mitochondrial permeability transition pore (mPTP) opening and ROS production (pivotal events in cell death) in a tissue specific manner. The polypeptide is 4-hydroxybenzoate polyprenyltransferase, mitochondrial (Rattus norvegicus (Rat)).